The chain runs to 370 residues: Histidinol-phosphate aminotransferase (370 aa).

N6-(pyridoxal phosphate)lysine is present on K222.

It belongs to the class-II pyridoxal-phosphate-dependent aminotransferase family. Histidinol-phosphate aminotransferase subfamily. In terms of assembly, homodimer. It depends on pyridoxal 5'-phosphate as a cofactor.

The enzyme catalyses L-histidinol phosphate + 2-oxoglutarate = 3-(imidazol-4-yl)-2-oxopropyl phosphate + L-glutamate. It functions in the pathway amino-acid biosynthesis; L-histidine biosynthesis; L-histidine from 5-phospho-alpha-D-ribose 1-diphosphate: step 7/9. The protein is Histidinol-phosphate aminotransferase of Bacillus cytotoxicus (strain DSM 22905 / CIP 110041 / 391-98 / NVH 391-98).